The primary structure comprises 208 residues: Thymidylate kinase (208 aa).

ATP is bound at residue 10 to 17 (GPEGSGKT).

It belongs to the thymidylate kinase family.

The catalysed reaction is dTMP + ATP = dTDP + ADP. In terms of biological role, phosphorylation of dTMP to form dTDP in both de novo and salvage pathways of dTTP synthesis. The polypeptide is Thymidylate kinase (Bacillus cereus (strain AH187)).